The following is a 427-amino-acid chain: Dihydroorotase (427 aa).

His-60 and His-62 together coordinate Zn(2+). Substrate-binding positions include 62 to 64 (HLR) and Asn-94. Zn(2+) is bound by residues Asp-151, His-178, and His-231. Asn-277 is a binding site for substrate. Asp-304 is a Zn(2+) binding site. Asp-304 is an active-site residue. Substrate contacts are provided by residues His-308 and 322-323 (FG).

Belongs to the metallo-dependent hydrolases superfamily. DHOase family. Class I DHOase subfamily. Requires Zn(2+) as cofactor.

It catalyses the reaction (S)-dihydroorotate + H2O = N-carbamoyl-L-aspartate + H(+). The protein operates within pyrimidine metabolism; UMP biosynthesis via de novo pathway; (S)-dihydroorotate from bicarbonate: step 3/3. Functionally, catalyzes the reversible cyclization of carbamoyl aspartate to dihydroorotate. The chain is Dihydroorotase from Pelotomaculum thermopropionicum (strain DSM 13744 / JCM 10971 / SI).